A 273-amino-acid polypeptide reads, in one-letter code: Large ribosomal subunit protein uL2 (273 aa).

The tract at residues Arg-221–Lys-273 is disordered.

The protein belongs to the universal ribosomal protein uL2 family. In terms of assembly, part of the 50S ribosomal subunit. Forms a bridge to the 30S subunit in the 70S ribosome.

In terms of biological role, one of the primary rRNA binding proteins. Required for association of the 30S and 50S subunits to form the 70S ribosome, for tRNA binding and peptide bond formation. It has been suggested to have peptidyltransferase activity; this is somewhat controversial. Makes several contacts with the 16S rRNA in the 70S ribosome. This chain is Large ribosomal subunit protein uL2, found in Sodalis glossinidius (strain morsitans).